Reading from the N-terminus, the 434-residue chain is Eukaryotic translation initiation factor 3 subunit E (434 aa).

The region spanning 219–392 (FFNHPKGRDL…GHVVMGTQPL (174 aa)) is the PCI domain.

It belongs to the eIF-3 subunit E family. In terms of assembly, component of the eukaryotic translation initiation factor 3 (eIF-3) complex. The eIF-3 complex interacts with pix. Interacts with mxt.

Its subcellular location is the cytoplasm. Functionally, component of the eukaryotic translation initiation factor 3 (eIF-3) complex, which is involved in protein synthesis of a specialized repertoire of mRNAs and, together with other initiation factors, stimulates binding of mRNA and methionyl-tRNAi to the 40S ribosome. The eIF-3 complex specifically targets and initiates translation of a subset of mRNAs involved in cell proliferation. This is Eukaryotic translation initiation factor 3 subunit E (eIF3-S6) from Drosophila ananassae (Fruit fly).